A 183-amino-acid polypeptide reads, in one-letter code: Nucleoside triphosphate pyrophosphatase (183 aa).

Aspartate 71 serves as the catalytic Proton acceptor.

Belongs to the Maf family. It depends on a divalent metal cation as a cofactor.

Its subcellular location is the cytoplasm. It carries out the reaction a ribonucleoside 5'-triphosphate + H2O = a ribonucleoside 5'-phosphate + diphosphate + H(+). It catalyses the reaction a 2'-deoxyribonucleoside 5'-triphosphate + H2O = a 2'-deoxyribonucleoside 5'-phosphate + diphosphate + H(+). Nucleoside triphosphate pyrophosphatase. May have a dual role in cell division arrest and in preventing the incorporation of modified nucleotides into cellular nucleic acids. The chain is Nucleoside triphosphate pyrophosphatase from Campylobacter jejuni subsp. jejuni serotype O:6 (strain 81116 / NCTC 11828).